The chain runs to 164 residues: 2-C-methyl-D-erythritol 2,4-cyclodiphosphate synthase (164 aa).

Positions 8 and 10 each coordinate a divalent metal cation. 4-CDP-2-C-methyl-D-erythritol 2-phosphate-binding positions include 8 to 10 and 34 to 35; these read DVH and HS. Position 42 (histidine 42) interacts with a divalent metal cation. 4-CDP-2-C-methyl-D-erythritol 2-phosphate is bound by residues 56 to 58, 132 to 135, phenylalanine 139, and lysine 142; these read DIG and TTEE.

This sequence belongs to the IspF family. Homotrimer. It depends on a divalent metal cation as a cofactor.

The catalysed reaction is 4-CDP-2-C-methyl-D-erythritol 2-phosphate = 2-C-methyl-D-erythritol 2,4-cyclic diphosphate + CMP. The protein operates within isoprenoid biosynthesis; isopentenyl diphosphate biosynthesis via DXP pathway; isopentenyl diphosphate from 1-deoxy-D-xylulose 5-phosphate: step 4/6. Its function is as follows. Involved in the biosynthesis of isopentenyl diphosphate (IPP) and dimethylallyl diphosphate (DMAPP), two major building blocks of isoprenoid compounds. Catalyzes the conversion of 4-diphosphocytidyl-2-C-methyl-D-erythritol 2-phosphate (CDP-ME2P) to 2-C-methyl-D-erythritol 2,4-cyclodiphosphate (ME-CPP) with a corresponding release of cytidine 5-monophosphate (CMP). The protein is 2-C-methyl-D-erythritol 2,4-cyclodiphosphate synthase of Clostridium kluyveri (strain NBRC 12016).